We begin with the raw amino-acid sequence, 242 residues long: Sugar fermentation stimulation protein homolog (242 aa).

It belongs to the SfsA family.

The sequence is that of Sugar fermentation stimulation protein homolog from Nitratidesulfovibrio vulgaris (strain DP4) (Desulfovibrio vulgaris).